Here is a 217-residue protein sequence, read N- to C-terminus: Ribonuclease T (217 aa).

One can recognise an Exonuclease domain in the interval 20-195; that stretch reads VVVDVETAGF…YDTEKTAELF (176 aa). Mg(2+) contacts are provided by Asp23, Glu25, His182, and Asp187. His182 acts as the Proton donor/acceptor in catalysis.

It belongs to the RNase T family. Homodimer. Mg(2+) is required as a cofactor.

Trims short 3' overhangs of a variety of RNA species, leaving a one or two nucleotide 3' overhang. Responsible for the end-turnover of tRNA: specifically removes the terminal AMP residue from uncharged tRNA (tRNA-C-C-A). Also appears to be involved in tRNA biosynthesis. The chain is Ribonuclease T from Vibrio vulnificus (strain YJ016).